Here is a 145-residue protein sequence, read N- to C-terminus: Large ribosomal subunit protein mL59 (145 aa).

Positions 123-135 (LKKTSKFKNERQK) are enriched in basic and acidic residues. Residues 123–145 (LKKTSKFKNERQKASKIAKPSPF) are disordered.

The protein belongs to the mitochondrion-specific ribosomal protein mL59 family. Component of the mitochondrial large ribosomal subunit (mt-LSU). Mature yeast 74S mitochondrial ribosomes consist of a small (37S) and a large (54S) subunit. The 37S small subunit contains a 15S ribosomal RNA (15S mt-rRNA) and at least 32 different proteins. The 54S large subunit contains a 21S rRNA (21S mt-rRNA) and at least 45 different proteins.

The protein localises to the mitochondrion. Component of the mitochondrial ribosome (mitoribosome), a dedicated translation machinery responsible for the synthesis of mitochondrial genome-encoded proteins, including at least some of the essential transmembrane subunits of the mitochondrial respiratory chain. The mitoribosomes are attached to the mitochondrial inner membrane and translation products are cotranslationally integrated into the membrane. In Schizosaccharomyces pombe (strain 972 / ATCC 24843) (Fission yeast), this protein is Large ribosomal subunit protein mL59 (mrpl25).